Here is a 1415-residue protein sequence, read N- to C-terminus: Major viral transcription factor ICP4 homolog (1415 aa).

4 disordered regions span residues M48–G272, D454–Q480, L691–Y935, and Q1371–D1415. The span at P96 to R105 shows a compositional bias: polar residues. Residues P125–P187 show a composition bias toward low complexity. The segment covering G245–K255 has biased composition (basic residues). Composition is skewed to polar residues over residues N263–G272 and S465–Q480. The span at S724–K738 shows a compositional bias: low complexity. Composition is skewed to polar residues over residues K814–S837 and V895–L910. Residues S911–S933 show a composition bias toward low complexity.

This sequence belongs to the herpesviridae ICP4 family. In terms of processing, a long stretch of serine residues may be a major site of phosphorylation.

It localises to the host nucleus. In terms of biological role, this IE protein is a multifunctional protein capable of migrating to the nucleus, binding to DNA, trans-activating other viral genes, and autoregulating its own synthesis. It is required for the switch from immediate-early to early mode of gene expression. The protein is Major viral transcription factor ICP4 homolog (ICP4) of Gallus gallus (Chicken).